The primary structure comprises 338 residues: Ketol-acid reductoisomerase (NADP(+)) (338 aa).

A KARI N-terminal Rossmann domain is found at 1–181 (MKVFYDKDCD…GGGRTGIIET (181 aa)). NADP(+) contacts are provided by residues 24–27 (YGSQ), arginine 47, serine 50, threonine 52, and 82–85 (DEFQ). Histidine 107 is a catalytic residue. Glycine 133 is a binding site for NADP(+). The KARI C-terminal knotted domain maps to 182 to 327 (TFKDETETDL…EQLRSMMPWI (146 aa)). Aspartate 190, glutamate 194, glutamate 226, and glutamate 230 together coordinate Mg(2+). Residue serine 251 coordinates substrate.

This sequence belongs to the ketol-acid reductoisomerase family. The cofactor is Mg(2+).

It catalyses the reaction (2R)-2,3-dihydroxy-3-methylbutanoate + NADP(+) = (2S)-2-acetolactate + NADPH + H(+). The enzyme catalyses (2R,3R)-2,3-dihydroxy-3-methylpentanoate + NADP(+) = (S)-2-ethyl-2-hydroxy-3-oxobutanoate + NADPH + H(+). It functions in the pathway amino-acid biosynthesis; L-isoleucine biosynthesis; L-isoleucine from 2-oxobutanoate: step 2/4. It participates in amino-acid biosynthesis; L-valine biosynthesis; L-valine from pyruvate: step 2/4. Involved in the biosynthesis of branched-chain amino acids (BCAA). Catalyzes an alkyl-migration followed by a ketol-acid reduction of (S)-2-acetolactate (S2AL) to yield (R)-2,3-dihydroxy-isovalerate. In the isomerase reaction, S2AL is rearranged via a Mg-dependent methyl migration to produce 3-hydroxy-3-methyl-2-ketobutyrate (HMKB). In the reductase reaction, this 2-ketoacid undergoes a metal-dependent reduction by NADPH to yield (R)-2,3-dihydroxy-isovalerate. The chain is Ketol-acid reductoisomerase (NADP(+)) from Pseudomonas putida (strain ATCC 700007 / DSM 6899 / JCM 31910 / BCRC 17059 / LMG 24140 / F1).